The following is a 1076-amino-acid chain: GPI inositol-deacylase A (1076 aa).

A helical transmembrane segment spans residues 3–23 (IATFPALAITALALVLWATVA). Asparagine 48 and asparagine 119 each carry an N-linked (GlcNAc...) asparagine glycan. The active site involves serine 240. An N-linked (GlcNAc...) asparagine glycan is attached at asparagine 404. The next 2 helical transmembrane spans lie at 765-785 (FLGF…LCLL) and 815-835 (WILA…SLLY). Asparagine 849 is a glycosylation site (N-linked (GlcNAc...) asparagine). The next 3 membrane-spanning stretches (helical) occupy residues 855 to 875 (FLGP…HWLL), 877 to 897 (ILTL…IAPE), and 910 to 930 (FLLL…VAVL). N-linked (GlcNAc...) asparagine glycosylation is found at asparagine 952 and asparagine 966. Helical transmembrane passes span 970-990 (SLLL…VVWL), 1006-1026 (EVSA…GIMI), and 1035-1055 (IYAT…HGVV).

This sequence belongs to the GPI inositol-deacylase family.

The protein resides in the endoplasmic reticulum membrane. Involved in inositol deacylation of GPI-anchored proteins which plays important roles in the quality control and ER-associated degradation of GPI-anchored proteins. The sequence is that of GPI inositol-deacylase A (BST1A) from Yarrowia lipolytica (strain CLIB 122 / E 150) (Yeast).